Reading from the N-terminus, the 583-residue chain is MQNKQEQWTVLKRLMSYLKPYGLLTFLALSFLLATTVIKSVIPLVASHFIDQYLSNLNQLAVTVLLVYYGLYILQTVVQYVGNLLFARVSYSIVRDIRRDAFANMEKLGMSYFDKTPAGSIVSRLTNDTETISDMFSGILSSFISAVFIFLTTLYTMLVLDFRLTALVLLFLPLIFLLVNLYRKKSVKIIEKTRSLLSDINSKLAENIEGIRIIQAFNQEKRLQAEFDEINQEHLVYANRSVALDALFLRPAMSLLKLLGYAVLMAYFGYRGFSIGITVGTMYAFIQYINRLFDPLIEVTQNFSTLQTAMVSAGRVFALIDERTYEPLQENGQAKVQEGNIRFEHVCFSYDGKHPILDDISFSVNKGETIAFVGHTGSGKSSIINVLMRFYEFQSGRVLLDDVDIRDFSQEELRKNIGLVLQEPFLYHGTIKSNIAMYQETSDEQVQAAAAFVDADSFIQELPQGYDSPVSERGSSFSTGQRQLLAFARTVASQPKILILDEATANIDSETESLVQASLAKMRQGRTTIAIAHRLSTIQDANCIYVLDKGRIIESGTHEELLALGGTYHKMYSLQAGAMADTL.

Residues Thr25 to Thr308 enclose the ABC transmembrane type-1 domain. 5 helical membrane passes run Phe26–Ala46, Ala61–Val81, Met135–Tyr155, Val159–Val179, and Leu259–Val279. An ABC transporter domain is found at Ile341–Leu574. Gly374–Ser381 serves as a coordination point for ATP.

It belongs to the ABC transporter superfamily.

Its subcellular location is the cell membrane. In Streptococcus pneumoniae serotype 4 (strain ATCC BAA-334 / TIGR4), this protein is Putative ABC transporter ATP-binding protein exp8 (exp8).